Here is a 271-residue protein sequence, read N- to C-terminus: Mannosyl-3-phosphoglycerate phosphatase (271 aa).

Residue Asp13 is the Nucleophile of the active site. Mg(2+) is bound by residues Asp13, Asp15, and Asp214.

Belongs to the HAD-like hydrolase superfamily. MPGP family. Mg(2+) serves as cofactor.

It localises to the cytoplasm. It carries out the reaction 2-O-(alpha-D-mannosyl)-3-phosphoglycerate + H2O = (2R)-2-O-(alpha-D-mannosyl)-glycerate + phosphate. The protein is Mannosyl-3-phosphoglycerate phosphatase of Escherichia coli (strain 55989 / EAEC).